The sequence spans 54 residues: Large ribosomal subunit protein bL33A (54 aa).

Belongs to the bacterial ribosomal protein bL33 family.

The polypeptide is Large ribosomal subunit protein bL33A (Mycobacterium marinum (strain ATCC BAA-535 / M)).